The following is a 506-amino-acid chain: Pentatricopeptide repeat-containing protein At5g18475 (506 aa).

The tract at residues 28-48 (SEKKKKPSPPPESSISPVETN) is disordered. PPR repeat units follow at residues 88–122 (NNAT…TCRF), 123–158 (QESL…RVKP), 159–194 (SLNA…GLQP), 195–229 (NTCI…GISY), 231–266 (NSIT…GISP), 267–301 (DPVT…GCNP), 302–336 (NVYN…GLKL), 337–371 (DTVG…RCRA), 372–406 (DTLT…GVHL), 407–441 (NKGS…GIWP), 442–476 (HHAT…GLIP), and 477–506 (GPKS…SLVS).

Belongs to the PPR family. P subfamily.

The polypeptide is Pentatricopeptide repeat-containing protein At5g18475 (Arabidopsis thaliana (Mouse-ear cress)).